The chain runs to 34 residues: MSDIN-like toxin proprotein 7 (34 aa).

A propeptide spanning residues 1–10 is cleaved from the precursor; sequence MSDINATRLP. The cyclopeptide (Ala-Pro) cross-link spans 11–17; that stretch reads AWLTDCP. Positions 18–34 are excised as a propeptide; that stretch reads CVGDDVNRLLTRGESLC.

This sequence belongs to the MSDIN fungal toxin family. Post-translationally, processed by the macrocyclase-peptidase enzyme POPB to yield a toxic cyclic heptapeptide. POPB first removes 10 residues from the N-terminus. Conformational trapping of the remaining peptide forces the enzyme to release this intermediate rather than proceed to macrocyclization. The enzyme rebinds the remaining peptide in a different conformation and catalyzes macrocyclization of the N-terminal 7 residues. Expressed in basidiocarps.

Probable toxin that belongs to the MSDIN-like toxin family responsible for a large number of food poisoning cases and deaths. This is MSDIN-like toxin proprotein 7 from Amanita exitialis (Guangzhou destroying angel).